The sequence spans 377 residues: 1,3,6,8-tetrahydroxynaphthalene synthase (377 aa).

Residue C164 is part of the active site.

This sequence belongs to the thiolase-like superfamily. Chalcone/stilbene synthases family. Homodimer.

The catalysed reaction is 5 malonyl-CoA + 5 H(+) = naphthalene-1,3,6,8-tetrol + 5 CO2 + 5 CoA + H2O. It participates in pigment biosynthesis; melanin biosynthesis. Its function is as follows. Involved in the biosynthesis of melanin but also various secondary metabolites containing a naphthoquinone ring. Catalyzes the iterative condensation of five CoA-linked malonyl units to form a pentaketide intermediate. THNS subsequently catalyzes the dual intramolecular Claisen and aldol condensations of this linear intermediate to produce the fused ring of 1,3,6,8-tetrahydroxynaphthalene (THN). The polypeptide is 1,3,6,8-tetrahydroxynaphthalene synthase (Streptomyces peucetius subsp. caesius).